A 415-amino-acid polypeptide reads, in one-letter code: Packaging protein 3 (415 aa).

The tract at residues Met1 to Arg55 is disordered. Positions Met1 to Ser173 are interaction with packaging protein 1. Residues Ser75 and Ser360 each carry the phosphoserine; by host modification. The span at Gly381–Gly394 shows a compositional bias: low complexity. The tract at residues Gly381–Tyr415 is disordered. Residues Glu400–Tyr415 show a composition bias toward acidic residues.

This sequence belongs to the adenoviridae packaging protein 3 family. As to quaternary structure, part of the genome packaging complex composed of packaging proteins 1, 2 and 3; this complex specifically binds to the packaging sequence on the left end of viral genomic DNA and performs packaging of the viral genome. Interacts with hexon-linking protein IIIa; this interaction is required to promote correct genome packaging. Post-translationally, cleaved at different sites by the viral protease during virion maturation.

It localises to the host nucleus. Involved in viral genome packaging through its interaction with packaging proteins 1 and 2. After proteolytic cleavage by adenovirus protease, L1 52/55k protein is removed from the capsid during viral maturation. The chain is Packaging protein 3 from Homo sapiens (Human).